Consider the following 163-residue polypeptide: ATP synthase subunit b 1 (163 aa).

A helical membrane pass occupies residues 7 to 27 (AETWVAVAFVILMALFAYLGV).

This sequence belongs to the ATPase B chain family. As to quaternary structure, F-type ATPases have 2 components, F(1) - the catalytic core - and F(0) - the membrane proton channel. F(1) has five subunits: alpha(3), beta(3), gamma(1), delta(1), epsilon(1). F(0) has three main subunits: a(1), b(2) and c(10-14). The alpha and beta chains form an alternating ring which encloses part of the gamma chain. F(1) is attached to F(0) by a central stalk formed by the gamma and epsilon chains, while a peripheral stalk is formed by the delta and b chains.

It is found in the cell inner membrane. Its function is as follows. F(1)F(0) ATP synthase produces ATP from ADP in the presence of a proton or sodium gradient. F-type ATPases consist of two structural domains, F(1) containing the extramembraneous catalytic core and F(0) containing the membrane proton channel, linked together by a central stalk and a peripheral stalk. During catalysis, ATP synthesis in the catalytic domain of F(1) is coupled via a rotary mechanism of the central stalk subunits to proton translocation. Functionally, component of the F(0) channel, it forms part of the peripheral stalk, linking F(1) to F(0). The sequence is that of ATP synthase subunit b 1 from Rhodopseudomonas palustris (strain BisB5).